Here is a 62-residue protein sequence, read N- to C-terminus: Photosystem II reaction center protein Z (62 aa).

A run of 2 helical transmembrane segments spans residues 8-28 (AVFALIATSSVLVISVPLVFA) and 41-61 (FSGTSLWIGLVFLVAILNSLI).

It belongs to the PsbZ family. As to quaternary structure, PSII is composed of 1 copy each of membrane proteins PsbA, PsbB, PsbC, PsbD, PsbE, PsbF, PsbH, PsbI, PsbJ, PsbK, PsbL, PsbM, PsbT, PsbY, PsbZ, Psb30/Ycf12, at least 3 peripheral proteins of the oxygen-evolving complex and a large number of cofactors. It forms dimeric complexes.

The protein localises to the plastid. Its subcellular location is the chloroplast thylakoid membrane. In terms of biological role, may control the interaction of photosystem II (PSII) cores with the light-harvesting antenna, regulates electron flow through the 2 photosystem reaction centers. PSII is a light-driven water plastoquinone oxidoreductase, using light energy to abstract electrons from H(2)O, generating a proton gradient subsequently used for ATP formation. This chain is Photosystem II reaction center protein Z, found in Hordeum vulgare (Barley).